Reading from the N-terminus, the 43-residue chain is Cuticle protein CP434 (43 aa).

2 consecutive repeat copies span residues 1 to 18 (ALVG…PVQF) and 25 to 42 (VLTG…NIQL).

Calcified shell.

The chain is Cuticle protein CP434 from Cancer pagurus (Rock crab).